Here is a 464-residue protein sequence, read N- to C-terminus: tRNA-2-methylthio-N(6)-dimethylallyladenosine synthase (464 aa).

In terms of domain architecture, MTTase N-terminal spans 19 to 135; it reads GSYWITTFGC…LENLLERVDL (117 aa). Residues Cys-28, Cys-64, Cys-98, Cys-170, Cys-174, and Cys-177 each coordinate [4Fe-4S] cluster. In terms of domain architecture, Radical SAM core spans 156–393; that stretch reads RDSSICGWVN…NELVETTSRK (238 aa). A TRAM domain is found at 396–464; it reads QRYLNNIESV…SFSLSGQIYK (69 aa).

The protein belongs to the methylthiotransferase family. MiaB subfamily. As to quaternary structure, monomer. [4Fe-4S] cluster serves as cofactor.

The protein localises to the cytoplasm. It catalyses the reaction N(6)-dimethylallyladenosine(37) in tRNA + (sulfur carrier)-SH + AH2 + 2 S-adenosyl-L-methionine = 2-methylsulfanyl-N(6)-dimethylallyladenosine(37) in tRNA + (sulfur carrier)-H + 5'-deoxyadenosine + L-methionine + A + S-adenosyl-L-homocysteine + 2 H(+). Catalyzes the methylthiolation of N6-(dimethylallyl)adenosine (i(6)A), leading to the formation of 2-methylthio-N6-(dimethylallyl)adenosine (ms(2)i(6)A) at position 37 in tRNAs that read codons beginning with uridine. The polypeptide is tRNA-2-methylthio-N(6)-dimethylallyladenosine synthase (Prochlorococcus marinus subsp. pastoris (strain CCMP1986 / NIES-2087 / MED4)).